Here is a 734-residue protein sequence, read N- to C-terminus: Phosphoribosylformylglycinamidine synthase subunit PurL (734 aa).

Residue His-46 is part of the active site. ATP-binding residues include Tyr-49 and Lys-88. Glu-90 contacts Mg(2+). Substrate contacts are provided by residues 91-94 (SHNH) and Arg-113. His-92 serves as the catalytic Proton acceptor. Asp-114 is a Mg(2+) binding site. Position 237 (Gln-237) interacts with substrate. Asp-265 is a binding site for Mg(2+). 309–311 (ESQ) is a substrate binding site. ATP contacts are provided by Asp-489 and Gly-526. Asn-527 provides a ligand contact to Mg(2+). Ser-529 contacts substrate.

The protein belongs to the FGAMS family. In terms of assembly, monomer. Part of the FGAM synthase complex composed of 1 PurL, 1 PurQ and 2 PurS subunits.

It localises to the cytoplasm. The catalysed reaction is N(2)-formyl-N(1)-(5-phospho-beta-D-ribosyl)glycinamide + L-glutamine + ATP + H2O = 2-formamido-N(1)-(5-O-phospho-beta-D-ribosyl)acetamidine + L-glutamate + ADP + phosphate + H(+). It participates in purine metabolism; IMP biosynthesis via de novo pathway; 5-amino-1-(5-phospho-D-ribosyl)imidazole from N(2)-formyl-N(1)-(5-phospho-D-ribosyl)glycinamide: step 1/2. In terms of biological role, part of the phosphoribosylformylglycinamidine synthase complex involved in the purines biosynthetic pathway. Catalyzes the ATP-dependent conversion of formylglycinamide ribonucleotide (FGAR) and glutamine to yield formylglycinamidine ribonucleotide (FGAM) and glutamate. The FGAM synthase complex is composed of three subunits. PurQ produces an ammonia molecule by converting glutamine to glutamate. PurL transfers the ammonia molecule to FGAR to form FGAM in an ATP-dependent manner. PurS interacts with PurQ and PurL and is thought to assist in the transfer of the ammonia molecule from PurQ to PurL. The chain is Phosphoribosylformylglycinamidine synthase subunit PurL from Gluconobacter oxydans (strain 621H) (Gluconobacter suboxydans).